The following is a 546-amino-acid chain: Arginine--tRNA ligase (546 aa).

The 'HIGH' region signature appears at 117-127; the sequence is ANPTGPLHIGR.

Belongs to the class-I aminoacyl-tRNA synthetase family.

It is found in the cytoplasm. It catalyses the reaction tRNA(Arg) + L-arginine + ATP = L-arginyl-tRNA(Arg) + AMP + diphosphate. The polypeptide is Arginine--tRNA ligase (Thermoplasma acidophilum (strain ATCC 25905 / DSM 1728 / JCM 9062 / NBRC 15155 / AMRC-C165)).